Reading from the N-terminus, the 482-residue chain is Glutamyl-tRNA(Gln) amidotransferase subunit A (482 aa).

Catalysis depends on charge relay system residues Lys74 and Ser149. Ser173 acts as the Acyl-ester intermediate in catalysis.

It belongs to the amidase family. GatA subfamily. As to quaternary structure, heterotrimer of A, B and C subunits.

The catalysed reaction is L-glutamyl-tRNA(Gln) + L-glutamine + ATP + H2O = L-glutaminyl-tRNA(Gln) + L-glutamate + ADP + phosphate + H(+). In terms of biological role, allows the formation of correctly charged Gln-tRNA(Gln) through the transamidation of misacylated Glu-tRNA(Gln) in organisms which lack glutaminyl-tRNA synthetase. The reaction takes place in the presence of glutamine and ATP through an activated gamma-phospho-Glu-tRNA(Gln). This chain is Glutamyl-tRNA(Gln) amidotransferase subunit A, found in Prochlorococcus marinus (strain AS9601).